A 107-amino-acid chain; its full sequence is Lipid-anchored protein YDL012C (107 aa).

The segment covering 1 to 18 (MSAQDYYGNSASKQSYSR) has biased composition (polar residues). The interval 1-86 (MSAQDYYGNS…VQQQPASSGN (86 aa)) is disordered. Ser-2 is modified (N-acetylserine). Residue Lys-13 forms a Glycyl lysine isopeptide (Lys-Gly) (interchain with G-Cter in ubiquitin) linkage. Residues 35-81 (PSQSQQNYYPPQQQQQQYQQQPQYYQQQQPQYYQQHPQQPIYVQQQP) are compositionally biased toward low complexity.

The protein belongs to the CYSTM1 family.

It is found in the cell membrane. The sequence is that of Lipid-anchored protein YDL012C from Saccharomyces cerevisiae (strain ATCC 204508 / S288c) (Baker's yeast).